A 413-amino-acid chain; its full sequence is 1-deoxy-D-xylulose 5-phosphate reductoisomerase (413 aa).

7 residues coordinate NADPH: T13, G14, S15, I16, K40, N41, and N127. A 1-deoxy-D-xylulose 5-phosphate-binding site is contributed by K128. An NADPH-binding site is contributed by E129. D153 serves as a coordination point for Mn(2+). 4 residues coordinate 1-deoxy-D-xylulose 5-phosphate: S154, E155, S184, and H207. Mn(2+) is bound at residue E155. G213 provides a ligand contact to NADPH. 1-deoxy-D-xylulose 5-phosphate is bound by residues S220, N225, K226, and E229. E229 is a Mn(2+) binding site.

The protein belongs to the DXR family. Requires Mg(2+) as cofactor. Mn(2+) is required as a cofactor.

The enzyme catalyses 2-C-methyl-D-erythritol 4-phosphate + NADP(+) = 1-deoxy-D-xylulose 5-phosphate + NADPH + H(+). The protein operates within isoprenoid biosynthesis; isopentenyl diphosphate biosynthesis via DXP pathway; isopentenyl diphosphate from 1-deoxy-D-xylulose 5-phosphate: step 1/6. Its function is as follows. Catalyzes the NADPH-dependent rearrangement and reduction of 1-deoxy-D-xylulose-5-phosphate (DXP) to 2-C-methyl-D-erythritol 4-phosphate (MEP). The chain is 1-deoxy-D-xylulose 5-phosphate reductoisomerase from Nitrosomonas eutropha (strain DSM 101675 / C91 / Nm57).